Reading from the N-terminus, the 260-residue chain is Carbonic anhydrase 3 (260 aa).

A2 bears the N-acetylalanine mark. The Alpha-carbonic anhydrase domain maps to 3–259; the sequence is KEWGYADHNG…LKGRVVRASF (257 aa). Phosphoserine is present on residues S29, S43, S50, and S55. Positions 64–67 are involved in proton transfer; it reads RTCR. T73 carries the post-translational modification Phosphothreonine. Residues H94, H96, and H119 each coordinate Zn(2+). Y127 carries the phosphotyrosine modification. Phosphothreonine occurs at positions 129 and 176. S-glutathionyl cysteine occurs at positions 182 and 187. 198–199 contacts substrate; that stretch reads TT. T216 is modified (phosphothreonine). A Phosphoserine modification is found at S219.

It belongs to the alpha-carbonic anhydrase family. Zn(2+) serves as cofactor. Post-translationally, S-thiolated both by thiol-disulfide exchange with glutathione disulfide and by oxyradical-initiated S-thiolation with reduced glutathione. In terms of processing, S-glutathionylated in hepatocytes under oxidative stress.

Its subcellular location is the cytoplasm. The enzyme catalyses hydrogencarbonate + H(+) = CO2 + H2O. With respect to regulation, inhibited by acetazolamide. Reversible hydration of carbon dioxide. The polypeptide is Carbonic anhydrase 3 (CA3) (Equus caballus (Horse)).